The following is a 725-amino-acid chain: Kelch domain-containing protein SSO1033 (725 aa).

Positions 1 to 28 (MKYGNMKKWAPLILFLFSLLLLQGISLH) are cleaved as a signal peptide. Kelch repeat units follow at residues 59–100 (SLYI…VYNN), 101–145 (TIYV…VYNN), 146–199 (AIYV…FNGT), 201–248 (LIIV…YYRG), 250–297 (LFIV…QVGN), and 299–342 (LYLA…VTLG). Fibronectin type-III domains lie at 323–410 (PPLP…TPAS), 411–504 (VPNP…TKAS), 505–583 (VFAF…VVYY), and 585–665 (PPAS…TGDY).

The chain is Kelch domain-containing protein SSO1033 from Saccharolobus solfataricus (strain ATCC 35092 / DSM 1617 / JCM 11322 / P2) (Sulfolobus solfataricus).